Reading from the N-terminus, the 678-residue chain is uncharacterized protein (678 aa).

A run of 8 helical transmembrane segments spans residues 228 to 250 (FFVILILGAVITLLLSLAIFSFL), 263 to 285 (LAMWWLPAILGVLSVCSVFVATQ), 300 to 322 (STGALPLLALIVKHSIAIALSCV), 334 to 356 (MLHNGFIGGYLASTLCLLYAVLF), 361 to 380 (FSLSAVFALEYALSLVFFSA), 387 to 405 (RIMLAMMFLLFAPFLYAYL), 420 to 439 (NVFFALGCVPFMLFMLTLFF), and 455 to 477 (NLLLSGALLTVLVINGVLWSVSL). The segment at 653 to 678 (PSSQGVHATPEKNACIRDETVPNLQE) is disordered.

It localises to the cell membrane. This is an uncharacterized protein from Treponema pallidum (strain Nichols).